Here is an 83-residue protein sequence, read N- to C-terminus: Cell division topological specificity factor (83 aa).

This sequence belongs to the MinE family.

Its function is as follows. Prevents the cell division inhibition by proteins MinC and MinD at internal division sites while permitting inhibition at polar sites. This ensures cell division at the proper site by restricting the formation of a division septum at the midpoint of the long axis of the cell. This Buchnera aphidicola subsp. Baizongia pistaciae (strain Bp) protein is Cell division topological specificity factor.